Here is a 73-residue protein sequence, read N- to C-terminus: Large ribosomal subunit protein bL31 (73 aa).

This sequence belongs to the bacterial ribosomal protein bL31 family. Type A subfamily. Part of the 50S ribosomal subunit.

Functionally, binds the 23S rRNA. This is Large ribosomal subunit protein bL31 from Synechococcus sp. (strain JA-3-3Ab) (Cyanobacteria bacterium Yellowstone A-Prime).